A 200-amino-acid chain; its full sequence is Probable nicotinate-nucleotide adenylyltransferase (200 aa).

Belongs to the NadD family.

The enzyme catalyses nicotinate beta-D-ribonucleotide + ATP + H(+) = deamido-NAD(+) + diphosphate. It functions in the pathway cofactor biosynthesis; NAD(+) biosynthesis; deamido-NAD(+) from nicotinate D-ribonucleotide: step 1/1. In terms of biological role, catalyzes the reversible adenylation of nicotinate mononucleotide (NaMN) to nicotinic acid adenine dinucleotide (NaAD). In Clostridium novyi (strain NT), this protein is Probable nicotinate-nucleotide adenylyltransferase.